The sequence spans 580 residues: FAD-dependent monooxygenase DEP4 (580 aa).

Residue 47–50 coordinates FAD; it reads VWSK. 58–60 serves as a coordination point for NADP(+); the sequence is FAQ. Val112 lines the FAD pocket. NADP(+) contacts are provided by residues 186–205, 222–223, and 354–355; these read VGRS…AGKK, AP, and DI. Residue Met473 coordinates FAD.

It belongs to the FAD-binding monooxygenase family. The cofactor is FAD.

It functions in the pathway polyketide biosynthesis. Part of the gene cluster that mediates the biosynthesis of depudecin, a highly oxidized eleven-carbon linear polyketide that acts as a histone deacetylase (HDAC) inhibitor and makes a small contribution to pathogenesis. The reducing polyketide synthase DEP5 is the central enzyme in depudecin biosynthesis by yielding the backbone polyketide chain. The monooxygenases DEP2 and DEP4, as well as the uncharacterized protein DEP1, then act as tailoring enzymes to modify the intermediate polyketide chain into depudecin. The sequence is that of FAD-dependent monooxygenase DEP4 from Fusarium langsethiae.